The chain runs to 615 residues: Homologous recombination OB-fold protein (615 aa).

Disordered regions lie at residues 42–75 (LRPVSSRPQETVQTQSSRPVPSYPTSNQSVPRLC), 213–326 (PWPS…PVTQ), and 546–590 (DFLE…FPEE). Position 47 is a phosphoserine (Ser-47). 3 stretches are compositionally biased toward polar residues: residues 47–71 (SRPQETVQTQSSRPVPSYPTSNQSV), 232–241 (SCVSTSQQRG), and 257–275 (IRSSPQNYGPGQPLQSPRA). Low complexity predominate over residues 302–317 (SSRAPVSSVESPVSTP).

As to quaternary structure, interacts with MCM8; this interaction is necessary for MCM8-MCM9 helicase complex recruitment to DNA damage sites. Interacts with RPA1; this interaction associates HROB with the RPA complex.

Its subcellular location is the nucleus. It is found in the chromosome. Its function is as follows. DNA-binding protein involved in homologous recombination that acts by recruiting the MCM8-MCM9 helicase complex to sites of DNA damage to promote DNA repair synthesis. The polypeptide is Homologous recombination OB-fold protein (Mus musculus (Mouse)).